Reading from the N-terminus, the 130-residue chain is Small ribosomal subunit protein uS11 (130 aa).

This sequence belongs to the universal ribosomal protein uS11 family. As to quaternary structure, part of the 30S ribosomal subunit.

Located on the platform of the 30S subunit. The sequence is that of Small ribosomal subunit protein uS11 from Thermoplasma acidophilum (strain ATCC 25905 / DSM 1728 / JCM 9062 / NBRC 15155 / AMRC-C165).